We begin with the raw amino-acid sequence, 470 residues long: Methylenetetrahydrofolate--tRNA-(uracil-5-)-methyltransferase TrmFO (470 aa).

10-15 (GAGLAG) provides a ligand contact to FAD.

It belongs to the MnmG family. TrmFO subfamily. FAD serves as cofactor.

The protein localises to the cytoplasm. It carries out the reaction uridine(54) in tRNA + (6R)-5,10-methylene-5,6,7,8-tetrahydrofolate + NADH + H(+) = 5-methyluridine(54) in tRNA + (6S)-5,6,7,8-tetrahydrofolate + NAD(+). It catalyses the reaction uridine(54) in tRNA + (6R)-5,10-methylene-5,6,7,8-tetrahydrofolate + NADPH + H(+) = 5-methyluridine(54) in tRNA + (6S)-5,6,7,8-tetrahydrofolate + NADP(+). Its function is as follows. Catalyzes the folate-dependent formation of 5-methyl-uridine at position 54 (M-5-U54) in all tRNAs. The protein is Methylenetetrahydrofolate--tRNA-(uracil-5-)-methyltransferase TrmFO of Prochlorococcus marinus subsp. pastoris (strain CCMP1986 / NIES-2087 / MED4).